We begin with the raw amino-acid sequence, 294 residues long: Cytidine deaminase (294 aa).

CMP/dCMP-type deaminase domains are found at residues 48–168 (DDDA…FGPR) and 186–294 (LKGD…VTLA). 89 to 91 (NME) is a binding site for substrate. His-102 is a binding site for Zn(2+). Glu-104 serves as the catalytic Proton donor. 2 residues coordinate Zn(2+): Cys-129 and Cys-132.

This sequence belongs to the cytidine and deoxycytidylate deaminase family. Homodimer. Requires Zn(2+) as cofactor.

The catalysed reaction is cytidine + H2O + H(+) = uridine + NH4(+). The enzyme catalyses 2'-deoxycytidine + H2O + H(+) = 2'-deoxyuridine + NH4(+). Functionally, this enzyme scavenges exogenous and endogenous cytidine and 2'-deoxycytidine for UMP synthesis. The chain is Cytidine deaminase from Cronobacter sakazakii (strain ATCC BAA-894) (Enterobacter sakazakii).